The sequence spans 369 residues: Endophilin-A (369 aa).

The BAR domain maps to 18 to 248; that stretch reads TEKMGGAEGT…LQEKRSEAES (231 aa). The stretch at 227 to 247 forms a coiled coil; that stretch reads QCADVLRGLQETLQEKRSEAE. Positions 275–294 are enriched in low complexity; it reads GTPSHISSSASPLPSPMRSP. Residues 275-296 are disordered; it reads GTPSHISSSASPLPSPMRSPAK. The SH3 domain maps to 305–364; it reads QQQPCCQALYDFDPENPGELGFKENDIITLLNRVDDNWYEGAVNGRTGYFPQSYVQVQVP.

The protein belongs to the endophilin family.

It localises to the cytoplasm. The protein localises to the membrane. Functionally, required presynaptically at the neuromuscular junction. Implicated in synaptic vesicle endocytosis. The protein is Endophilin-A of Drosophila pseudoobscura pseudoobscura (Fruit fly).